Reading from the N-terminus, the 802-residue chain is Valine--tRNA ligase (802 aa).

Residues 45–55 carry the 'HIGH' region motif; it reads PTISGQLHIGH. The 'KMSKS' region signature appears at 524 to 528; that stretch reads KMSKS. Lysine 527 contributes to the ATP binding site.

The protein belongs to the class-I aminoacyl-tRNA synthetase family. ValS type 2 subfamily. Monomer.

The protein resides in the cytoplasm. It catalyses the reaction tRNA(Val) + L-valine + ATP = L-valyl-tRNA(Val) + AMP + diphosphate. Functionally, catalyzes the attachment of valine to tRNA(Val). As ValRS can inadvertently accommodate and process structurally similar amino acids such as threonine, to avoid such errors, it has a 'posttransfer' editing activity that hydrolyzes mischarged Thr-tRNA(Val) in a tRNA-dependent manner. This is Valine--tRNA ligase from Ehrlichia canis (strain Jake).